The primary structure comprises 258 residues: Ubiquinone/menaquinone biosynthesis C-methyltransferase UbiE (258 aa).

Residues 1–20 are disordered; it reads MSESRTSADGGMETSYGFRE. S-adenosyl-L-methionine contacts are provided by residues Thr-81, Asp-102, and 130 to 131; that span reads NA.

Belongs to the class I-like SAM-binding methyltransferase superfamily. MenG/UbiE family.

The enzyme catalyses a 2-demethylmenaquinol + S-adenosyl-L-methionine = a menaquinol + S-adenosyl-L-homocysteine + H(+). It catalyses the reaction a 2-methoxy-6-(all-trans-polyprenyl)benzene-1,4-diol + S-adenosyl-L-methionine = a 5-methoxy-2-methyl-3-(all-trans-polyprenyl)benzene-1,4-diol + S-adenosyl-L-homocysteine + H(+). Its pathway is quinol/quinone metabolism; menaquinone biosynthesis; menaquinol from 1,4-dihydroxy-2-naphthoate: step 2/2. It functions in the pathway cofactor biosynthesis; ubiquinone biosynthesis. Its function is as follows. Methyltransferase required for the conversion of demethylmenaquinol (DMKH2) to menaquinol (MKH2) and the conversion of 2-polyprenyl-6-methoxy-1,4-benzoquinol (DDMQH2) to 2-polyprenyl-3-methyl-6-methoxy-1,4-benzoquinol (DMQH2). The chain is Ubiquinone/menaquinone biosynthesis C-methyltransferase UbiE from Rhizobium etli (strain ATCC 51251 / DSM 11541 / JCM 21823 / NBRC 15573 / CFN 42).